Reading from the N-terminus, the 357-residue chain is tRNA N6-adenosine threonylcarbamoyltransferase (357 aa).

Residues His-119 and His-123 each contribute to the Fe cation site. Substrate-binding positions include 141–145 (LISGG), Asp-174, Gly-187, and Asn-284. Fe cation is bound at residue Asp-312.

This sequence belongs to the KAE1 / TsaD family. Requires Fe(2+) as cofactor.

Its subcellular location is the cytoplasm. The enzyme catalyses L-threonylcarbamoyladenylate + adenosine(37) in tRNA = N(6)-L-threonylcarbamoyladenosine(37) in tRNA + AMP + H(+). Required for the formation of a threonylcarbamoyl group on adenosine at position 37 (t(6)A37) in tRNAs that read codons beginning with adenine. Is involved in the transfer of the threonylcarbamoyl moiety of threonylcarbamoyl-AMP (TC-AMP) to the N6 group of A37, together with TsaE and TsaB. TsaD likely plays a direct catalytic role in this reaction. This chain is tRNA N6-adenosine threonylcarbamoyltransferase, found in Pelagibacter ubique (strain HTCC1062).